The sequence spans 388 residues: Succinate--CoA ligase [ADP-forming] subunit beta (388 aa).

The ATP-grasp domain maps to 9 to 244; it reads KQLFAEYGLP…PSQDDAREAH (236 aa). ATP-binding positions include Lys-46, 53 to 55, Glu-99, Thr-102, and Glu-107; that span reads GRG. Mg(2+)-binding residues include Asn-199 and Asp-213. Substrate contacts are provided by residues Asn-264 and 321–323; that span reads GIV.

It belongs to the succinate/malate CoA ligase beta subunit family. Heterotetramer of two alpha and two beta subunits. The cofactor is Mg(2+).

It catalyses the reaction succinate + ATP + CoA = succinyl-CoA + ADP + phosphate. It carries out the reaction GTP + succinate + CoA = succinyl-CoA + GDP + phosphate. It functions in the pathway carbohydrate metabolism; tricarboxylic acid cycle; succinate from succinyl-CoA (ligase route): step 1/1. Its function is as follows. Succinyl-CoA synthetase functions in the citric acid cycle (TCA), coupling the hydrolysis of succinyl-CoA to the synthesis of either ATP or GTP and thus represents the only step of substrate-level phosphorylation in the TCA. The beta subunit provides nucleotide specificity of the enzyme and binds the substrate succinate, while the binding sites for coenzyme A and phosphate are found in the alpha subunit. In Pseudomonas paraeruginosa (strain DSM 24068 / PA7) (Pseudomonas aeruginosa (strain PA7)), this protein is Succinate--CoA ligase [ADP-forming] subunit beta.